Consider the following 75-residue polypeptide: UPF0270 protein PFLU_4323 (75 aa).

It belongs to the UPF0270 family.

This Pseudomonas fluorescens (strain SBW25) protein is UPF0270 protein PFLU_4323.